Consider the following 198-residue polypeptide: Nucleoside triphosphate pyrophosphatase (198 aa).

D72 acts as the Proton acceptor in catalysis.

The protein belongs to the Maf family. Requires a divalent metal cation as cofactor.

Its subcellular location is the cytoplasm. It carries out the reaction a ribonucleoside 5'-triphosphate + H2O = a ribonucleoside 5'-phosphate + diphosphate + H(+). The catalysed reaction is a 2'-deoxyribonucleoside 5'-triphosphate + H2O = a 2'-deoxyribonucleoside 5'-phosphate + diphosphate + H(+). Functionally, nucleoside triphosphate pyrophosphatase. May have a dual role in cell division arrest and in preventing the incorporation of modified nucleotides into cellular nucleic acids. This is Nucleoside triphosphate pyrophosphatase from Corynebacterium aurimucosum (strain ATCC 700975 / DSM 44827 / CIP 107346 / CN-1) (Corynebacterium nigricans).